Consider the following 290-residue polypeptide: Arginine and glutamate-rich protein 1 (290 aa).

The span at 1-10 (MGSRSRTPSP) shows a compositional bias: polar residues. Disordered regions lie at residues 1–137 (MGSR…AKEL), 193–216 (ERRREQIREEERRREEDEKQKREE), and 249–290 (MDEE…PGAL). A compositionally biased stretch (basic residues) spans 12–28 (GKRRHHKSKHKKRSKSH). 2 stretches are compositionally biased toward basic and acidic residues: residues 29-44 (HDHERPSTRTDRDKSS) and 53-76 (RERDRDRERDRHRSDRHTERDYRH). Phosphoserine is present on residues serine 77 and serine 79. Residues 88–99 (SSSSSDSQYSEQ) are compositionally biased toward low complexity. Residues 111 to 269 (FKKLDEQNQM…QEKRVKEEQK (159 aa)) adopt a coiled-coil conformation. The segment covering 124 to 137 (RLAEMERQRRAKEL) has biased composition (basic and acidic residues). Residues 249–269 (MDEERQRMRKEQEKRVKEEQK) are compositionally biased toward basic and acidic residues.

Belongs to the ARGLU1 family. Associates with the U1-snRNP complex; the interaction is enhanced by binding of Arglu1 to a stable intronic sequence RNA (sisRNA) produced from the Arglu1 gene by premature cleavage.

Its subcellular location is the nucleus. The protein localises to the nucleus speckle. Post-transcriptional regulator of gene expression; modulates splicing and premature cleavage at cryptic polyadenylation sites of its own pre-mRNA through binding and regulation of the U1-snRNP complex. The chain is Arginine and glutamate-rich protein 1 from Drosophila melanogaster (Fruit fly).